The chain runs to 429 residues: RNA-binding protein BRN2 (429 aa).

RRM domains lie at 12 to 93, 100 to 180, and 330 to 408; these read VKLF…YADG, HKLF…WADT, and ANLF…LKRD. The interval 410 to 429 is disordered; that stretch reads GQQQQQQQSKNPLFNGLLNS. Residues 418 to 429 are compositionally biased toward polar residues; that stretch reads SKNPLFNGLLNS.

As to expression, expressed in roots, stems, flowers and siliques.

The protein localises to the cytoplasm. Functionally, RNA-binding protein involved in the regulation of flowering time. Acts as a repressor of the activity of SOC1, a transcriptional activator of flowering time. Binds to the 3'-UTR of SOC1 mRNA in the cytoplasm and participates in SOC1 mRNA decay, mediated by the distal region of the SOC1 3'-UTR. The sequence is that of RNA-binding protein BRN2 from Arabidopsis thaliana (Mouse-ear cress).